Consider the following 108-residue polypeptide: Large ribosomal subunit protein bL31B (108 aa).

The segment at Lys86–Lys108 is disordered. Over residues Lys97–Lys108 the composition is skewed to basic residues.

This sequence belongs to the bacterial ribosomal protein bL31 family. Type B subfamily. In terms of assembly, part of the 50S ribosomal subunit.

The sequence is that of Large ribosomal subunit protein bL31B from Chlamydia trachomatis serovar L2 (strain ATCC VR-902B / DSM 19102 / 434/Bu).